The primary structure comprises 180 residues: Negative modulator of initiation of replication (180 aa).

Interaction with DNA stretches follow at residues 86–87, 115–119, and 149–155; these read AV, RTRVY, and NTNTGRK.

The protein belongs to the SeqA family. As to quaternary structure, homodimer. Polymerizes to form helical filaments.

Its subcellular location is the cytoplasm. In terms of biological role, negative regulator of replication initiation, which contributes to regulation of DNA replication and ensures that replication initiation occurs exactly once per chromosome per cell cycle. Binds to pairs of hemimethylated GATC sequences in the oriC region, thus preventing assembly of replication proteins and re-initiation at newly replicated origins. Repression is relieved when the region becomes fully methylated. The sequence is that of Negative modulator of initiation of replication from Enterobacter sp. (strain 638).